Consider the following 413-residue polypeptide: Phosphatidylcholine:ceramide cholinephosphotransferase 1 (413 aa).

Positions 7–70 constitute an SAM domain; it reads WSPKKVADWL…LDMIETLKME (64 aa). Serine 8 is modified (phosphoserine). The next 5 helical transmembrane spans lie at 136-156, 184-204, 215-235, 276-296, and 304-324; these read FLAF…ISVV, FSIC…QWLL, FFCI…VTTL, MCGD…YLFI, and LWWY…CILL. Residue histidine 285 is part of the active site. Residues 325-413 lie on the Cytoplasmic side of the membrane; the sequence is AHDHYTVDVV…VKYSRLVNDT (89 aa). Active-site residues include histidine 328 and aspartate 332.

The protein belongs to the sphingomyelin synthase family. As to expression, brain, heart, kidney, liver, muscle and stomach.

The protein resides in the golgi apparatus membrane. The catalysed reaction is an N-acylsphing-4-enine + a 1,2-diacyl-sn-glycero-3-phosphocholine = a sphingomyelin + a 1,2-diacyl-sn-glycerol. It catalyses the reaction an N-acylsphinganine + a 1,2-diacyl-sn-glycero-3-phosphocholine = an N-acylsphinganine-1-phosphocholine + a 1,2-diacyl-sn-glycerol. It carries out the reaction an N-acyl-(4R)-4-hydroxysphinganine + a 1,2-diacyl-sn-glycero-3-phosphocholine = an N-acyl-(4R)-4-hydroxysphinganine-phosphocholine + a 1,2-diacyl-sn-glycerol. The enzyme catalyses 1-(9Z-octadecenoyl)-2-acyl-sn-3-glycerol + a sphingomyelin = a 1-(9Z-octadecenoyl)-2-acyl-sn-glycero-3-phosphocholine + an N-acylsphing-4-enine. The catalysed reaction is N-hexadecanoylsphinganine + a 1,2-diacyl-sn-glycero-3-phosphocholine = N-hexadecanoyl-sphinganine-1-phosphocholine + a 1,2-diacyl-sn-glycerol. It catalyses the reaction N-hexadecanoyl-(4R)-hydroxysphinganine + a 1,2-diacyl-sn-glycero-3-phosphocholine = N-hexadecanoyl-(4R)-hydroxysphinganine-phosphocholine + a 1,2-diacyl-sn-glycerol. It carries out the reaction an N-acylsphing-4-enine + a 1,2-diacyl-sn-glycero-3-phosphoethanolamine = an N-acylsphing-4-enine 1-phosphoethanolamine + a 1,2-diacyl-sn-glycerol. It functions in the pathway sphingolipid metabolism. With respect to regulation, inhibited by bacterial PC-phospholipase C inhibitor D609. In terms of biological role, major sphingomyelin synthase at the Golgi apparatus. Catalyzes the reversible transfer of phosphocholine moiety in sphingomyelin biosynthesis: in the forward reaction transfers phosphocholine head group of phosphatidylcholine (PC) on to ceramide (CER) to form ceramide phosphocholine (sphingomyelin, SM) and diacylglycerol (DAG) as by-product, and in the reverse reaction transfers phosphocholine from SM to DAG to form PC and CER. The direction of the reaction depends on the levels of CER and DAG in Golgi membranes. Converts the newly synthesized CER, that is transported from the endoplasmic reticulum to the trans-Golgi by the Cer transport protein (CERT), to SM. Can form a heteromeric complex with glucosylceramide synthase (GCS) increasing SMS activity and reducing glucosylceramide synthesis, a critical mechanism that controls the metabolic fate of CER in the Golgi. Does not use free phosphorylcholine or CDP-choline as donor. Can also transfer phosphoethanolamine head group of phosphatidylethanolamine (PE) on to CER to form ceramide phosphoethanolamine (CPE). Regulates receptor-mediated signal transduction via mitogenic DAG and proapoptotic CER, as well as via SM, a structural component of membrane rafts that serve as platforms for signal transduction and protein sorting. Plays a role in secretory transport via regulation of DAG pool at the Golgi apparatus and its downstream effects on PRKD1. This Homo sapiens (Human) protein is Phosphatidylcholine:ceramide cholinephosphotransferase 1 (SGMS1).